The chain runs to 162 residues: uncharacterized protein (162 aa).

The first 34 residues, 1–34 (MRKKNNIKKWLLIIAGFLIICIITLFVMVSGNKV), serve as a signal peptide directing secretion.

This is an uncharacterized protein from Bacillus subtilis (strain 168).